The following is a 793-amino-acid chain: Endonuclease MutS2 (793 aa).

335 to 342 contributes to the ATP binding site; it reads GPNTGGKT. Residues 718-793 enclose the Smr domain; that stretch reads IDVRGYNLEE…ESGVTIVELR (76 aa).

It belongs to the DNA mismatch repair MutS family. MutS2 subfamily. In terms of assembly, homodimer. Binds to stalled ribosomes, contacting rRNA.

Endonuclease that is involved in the suppression of homologous recombination and thus may have a key role in the control of bacterial genetic diversity. Functionally, acts as a ribosome collision sensor, splitting the ribosome into its 2 subunits. Detects stalled/collided 70S ribosomes which it binds and splits by an ATP-hydrolysis driven conformational change. Acts upstream of the ribosome quality control system (RQC), a ribosome-associated complex that mediates the extraction of incompletely synthesized nascent chains from stalled ribosomes and their subsequent degradation. Probably generates substrates for RQC. The protein is Endonuclease MutS2 of Acetivibrio thermocellus (strain ATCC 27405 / DSM 1237 / JCM 9322 / NBRC 103400 / NCIMB 10682 / NRRL B-4536 / VPI 7372) (Clostridium thermocellum).